The following is a 308-amino-acid chain: Elongation factor Ts (308 aa).

The segment at 80–83 is involved in Mg(2+) ion dislocation from EF-Tu; the sequence is TDFV.

It belongs to the EF-Ts family.

The protein resides in the cytoplasm. Its function is as follows. Associates with the EF-Tu.GDP complex and induces the exchange of GDP to GTP. It remains bound to the aminoacyl-tRNA.EF-Tu.GTP complex up to the GTP hydrolysis stage on the ribosome. The polypeptide is Elongation factor Ts (Sphingopyxis alaskensis (strain DSM 13593 / LMG 18877 / RB2256) (Sphingomonas alaskensis)).